A 549-amino-acid chain; its full sequence is Chaperonin GroEL (549 aa).

Residues 30 to 33 (TLGP), K51, 87 to 91 (DGTTT), G415, and D495 each bind ATP.

It belongs to the chaperonin (HSP60) family. In terms of assembly, forms a cylinder of 14 subunits composed of two heptameric rings stacked back-to-back. Interacts with the co-chaperonin GroES.

It is found in the cytoplasm. It catalyses the reaction ATP + H2O + a folded polypeptide = ADP + phosphate + an unfolded polypeptide.. Its function is as follows. Together with its co-chaperonin GroES, plays an essential role in assisting protein folding. The GroEL-GroES system forms a nano-cage that allows encapsulation of the non-native substrate proteins and provides a physical environment optimized to promote and accelerate protein folding. The sequence is that of Chaperonin GroEL from Colwellia maris.